The following is a 1085-amino-acid chain: Activating transcription factor 7-interacting protein 1 (1085 aa).

9 disordered regions span residues 1 to 22 (MDNT…RASD), 47 to 109 (GKHE…VNVT), 127 to 245 (LGSN…NTDS), 329 to 381 (PNKS…VHSK), 469 to 499 (AAKE…ANAN), 517 to 560 (RNVG…TSSP), 650 to 843 (ASTN…TTIH), 889 to 910 (NSVR…QTGS), and 932 to 975 (GAPQ…ANTS). Over residues 54-64 (SDLNSPLSNTD) the composition is skewed to polar residues. Composition is skewed to basic and acidic residues over residues 82 to 91 (SEIKRPESRA) and 133 to 150 (NFHE…RESD). 2 stretches are compositionally biased toward polar residues: residues 151-165 (TPSG…NSFS) and 173-182 (NDITIISNSP). Basic and acidic residues-rich tracts occupy residues 347-379 (EREV…DSVH) and 469-479 (AAKEDMKKKQE). Residues 446–480 (NKRHKTVLTELQAKITRLTKRFGAAKEDMKKKQEN) are a coiled coil. Composition is skewed to low complexity over residues 487-499 (SSGK…ANAN), 529-547 (APVS…TPAS), and 651-666 (STNT…VSSP). Residues 667 to 717 (GVQRNSPASAGSVRTTLAVQAVSTTHPVAQTTRTSLPTVGTSGLHNSTSSR) are compositionally biased toward polar residues. The segment covering 732–743 (TAPTEPPTITAP) has biased composition (low complexity). 3 stretches are compositionally biased toward polar residues: residues 746–775 (ENQT…VTGS), 792–810 (SSQA…AQSI), and 830–843 (TGVP…TTIH). A compositionally biased stretch (pro residues) spans 950–968 (PRPVHPAPLPEAPQPPRLP). In terms of domain architecture, Fibronectin type-III spans 976 to 1082 (LPQKPQLKLA…DPQSTDVISS (107 aa)).

This sequence belongs to the MCAF family.

It localises to the nucleus. Recruiter that couples transcriptional factors to general transcription apparatus and thereby modulates transcription regulation and chromatin formation. Can both act as an activator or a repressor depending on the context. Mediates MBD1-dependent transcriptional repression, probably by recruiting complexes containing histone methyltransferase activity. May belong to a complex that represses transcription and couples DNA methylation and histone H3 'Lys-9' trimethylation (H3K9me3). The polypeptide is Activating transcription factor 7-interacting protein 1 (ATF7IP) (Gallus gallus (Chicken)).